A 62-amino-acid chain; its full sequence is Large ribosomal subunit protein uL29 (62 aa).

This sequence belongs to the universal ribosomal protein uL29 family.

The chain is Large ribosomal subunit protein uL29 from Trichlorobacter lovleyi (strain ATCC BAA-1151 / DSM 17278 / SZ) (Geobacter lovleyi).